A 164-amino-acid polypeptide reads, in one-letter code: MIKTAKISTLRLAITRNARNLSFTTLVRSPEVDNSKIKTLEDLTRLETLEGVDPELIKRLINEKTQEFNTQDELKLLKSMQMEQDRLNEVPLKRFTRPLWIFILMASTFYLGAHLVWWKLAYEKKEVELKHKVDSLETTLKDVMKEKATGPTPCNNKKSWYKFW.

The transit peptide at 1 to 28 (MIKTAKISTLRLAITRNARNLSFTTLVR) directs the protein to the mitochondrion. Residues 29-97 (SPEVDNSKIK…NEVPLKRFTR (69 aa)) are Mitochondrial matrix-facing. A helical membrane pass occupies residues 98–118 (PLWIFILMASTFYLGAHLVWW). Topologically, residues 119–164 (KLAYEKKEVELKHKVDSLETTLKDVMKEKATGPTPCNNKKSWYKFW) are mitochondrial intermembrane. The stretch at 121 to 149 (AYEKKEVELKHKVDSLETTLKDVMKEKAT) forms a coiled coil.

It belongs to the INA17 family. In terms of assembly, component of the inner membrane assembly (INA) complex, composed of INA17 and INA22. Interacts with a subset of F(1)F(0)-ATP synthase subunits of the F(1)-domain and the peripheral stalk.

Its subcellular location is the mitochondrion inner membrane. Component of the INA complex (INAC) that promotes the biogenesis of mitochondrial F(1)F(0)-ATP synthase. INAC facilitates the assembly of the peripheral stalk and promotes the assembly of the catalytic F(1)-domain with the membrane-embedded F(0)-domain. This is Inner membrane assembly complex subunit 17 from Candida glabrata (strain ATCC 2001 / BCRC 20586 / JCM 3761 / NBRC 0622 / NRRL Y-65 / CBS 138) (Yeast).